The chain runs to 206 residues: Threonine efflux protein (206 aa).

A helical membrane pass occupies residues Met1 to Pro21. Residues Asp22 to Leu43 lie on the Periplasmic side of the membrane. Residues Gly44 to Ile64 form a helical membrane-spanning segment. Residues Glu65 to Lys66 are Cytoplasmic-facing. The helical transmembrane segment at Met67 to Tyr87 threads the bilayer. The Periplasmic portion of the chain corresponds to Gln88–Arg149. A helical membrane pass occupies residues Trp150 to Leu173. Residues Pro174–Arg206 are Cytoplasmic-facing.

This sequence belongs to the Rht family.

It is found in the cell inner membrane. Its function is as follows. Conducts the efflux of threonine. This is Threonine efflux protein (rhtC) from Escherichia coli O157:H7.